The sequence spans 256 residues: Isoprenyl transferase (256 aa).

The active site involves Asp-33. Asp-33 is a binding site for Mg(2+). Substrate-binding positions include 34–37, Trp-38, Arg-46, His-50, and 78–80; these read GNGR and STE. Asn-81 (proton acceptor) is an active-site residue. Residues Trp-82, Arg-84, Arg-201, and 207–209 contribute to the substrate site; that span reads RIS. Glu-220 is a Mg(2+) binding site.

This sequence belongs to the UPP synthase family. As to quaternary structure, homodimer. Mg(2+) serves as cofactor.

Functionally, catalyzes the condensation of isopentenyl diphosphate (IPP) with allylic pyrophosphates generating different type of terpenoids. This Staphylococcus haemolyticus (strain JCSC1435) protein is Isoprenyl transferase.